The primary structure comprises 314 residues: MAPSSRSPSPRTKRLRRARGEKEIGRSREREDDGREREKRNSRERDRDIGRDRDRERKGEGERDREVGDKRRRSGREDTEKRRRTRTDDERYSRGRHERSTSPSDRSHRSSRRSPERAIASRHDEGSNARGGSEEPNVEEDSVARMRAVEEALAAKKKEEPSFELSGKLAEETNRYRGITLLFNEPPEARKPSERWRLYVFKDGEPLNEPLCLHRQSCYLFGRERRIADIPTDHPSCSKQHAVIQYREMEKEKPDGMMGKQVKPYIMDLGSTNKTYINESPIEPQRYYELFEKDTIKFGNSSREYVLLHENSAE.

Residues 1–10 (MAPSSRSPSP) show a composition bias toward low complexity. The segment at 1 to 146 (MAPSSRSPSP…NVEEDSVARM (146 aa)) is disordered. Basic and acidic residues predominate over residues 18 to 127 (ARGEKEIGRS…AIASRHDEGS (110 aa)). Position 133 is a phosphoserine (Ser-133). Positions 219–282 (YLFGRERRIA…NKTYINESPI (64 aa)) constitute an FHA domain.

As to quaternary structure, interacts with DCL1 (via N-terminus). Expressed in roots, lateral roots, vascular strands of roots and leaves, vegetative meristems, pollen and developing seeds.

Its subcellular location is the nucleus. Functionally, involved in the microRNA (miRNA) and short interfering RNA (siRNA) biogenesis. May facilitate DCL1 to access or recognize primary miRNAs. Binds RNA non-specifically. The sequence is that of FHA domain-containing protein DDL (DDL) from Arabidopsis thaliana (Mouse-ear cress).